Consider the following 541-residue polypeptide: Transmembrane protein 151 homolog (541 aa).

Helical transmembrane passes span 27-47 (GYGKCLVCSLLLILCFFYATF), 73-93 (YNFVPIVFGLMLYIVYLMECW), and 254-274 (PWFLHPIVFWFFSIFVLSWPL). The interval 503 to 541 (ASISHSSSKDLKSLTLKSSSSNNNNNNSNNNNNDDPEHP) is disordered. The segment covering 515–535 (SLTLKSSSSNNNNNNSNNNNN) has biased composition (low complexity).

The protein belongs to the TMEM151 family.

Its subcellular location is the membrane. This is Transmembrane protein 151 homolog from Caenorhabditis elegans.